A 307-amino-acid chain; its full sequence is Small ribosomal subunit biogenesis GTPase RsgA (307 aa).

Residues 1-20 (MPSEHPFSDGISTPNPKETM) are disordered. Over residues 10–20 (GISTPNPKETM) the composition is skewed to polar residues. The CP-type G domain maps to 85–242 (RQDAWKTKLI…LIDSPGLQEF (158 aa)). GTP is bound by residues 135 to 138 (NKAD) and 184 to 192 (GQSGMGKST). Residues C266, C271, H273, and C279 each contribute to the Zn(2+) site.

Belongs to the TRAFAC class YlqF/YawG GTPase family. RsgA subfamily. Monomer. Associates with 30S ribosomal subunit, binds 16S rRNA. It depends on Zn(2+) as a cofactor.

Its subcellular location is the cytoplasm. Its function is as follows. One of several proteins that assist in the late maturation steps of the functional core of the 30S ribosomal subunit. Helps release RbfA from mature subunits. May play a role in the assembly of ribosomal proteins into the subunit. Circularly permuted GTPase that catalyzes slow GTP hydrolysis, GTPase activity is stimulated by the 30S ribosomal subunit. The sequence is that of Small ribosomal subunit biogenesis GTPase RsgA from Neisseria meningitidis serogroup A / serotype 4A (strain DSM 15465 / Z2491).